A 705-amino-acid chain; its full sequence is DNA ligase (705 aa).

NAD(+) is bound by residues 42–46 (DADFD), 91–92 (SL), and Glu-125. Lys-127 (N6-AMP-lysine intermediate) is an active-site residue. 4 residues coordinate NAD(+): Arg-148, Glu-183, Lys-299, and Lys-323. Residues Cys-428, Cys-431, Cys-446, and Cys-452 each contribute to the Zn(2+) site. The region spanning 626-705 (TDGSPVAGKT…DGWLALIEGL (80 aa)) is the BRCT domain.

This sequence belongs to the NAD-dependent DNA ligase family. LigA subfamily. Requires Mg(2+) as cofactor. It depends on Mn(2+) as a cofactor.

The catalysed reaction is NAD(+) + (deoxyribonucleotide)n-3'-hydroxyl + 5'-phospho-(deoxyribonucleotide)m = (deoxyribonucleotide)n+m + AMP + beta-nicotinamide D-nucleotide.. In terms of biological role, DNA ligase that catalyzes the formation of phosphodiester linkages between 5'-phosphoryl and 3'-hydroxyl groups in double-stranded DNA using NAD as a coenzyme and as the energy source for the reaction. It is essential for DNA replication and repair of damaged DNA. The chain is DNA ligase from Roseobacter denitrificans (strain ATCC 33942 / OCh 114) (Erythrobacter sp. (strain OCh 114)).